Consider the following 538-residue polypeptide: Aldehyde dehydrogenase family 2 member B4, mitochondrial (538 aa).

A mitochondrion-targeting transit peptide spans 1–38; it reads MAARRVSSLLSRSFSASSPLLFRSQGRNCYNGGILRRF. 282–287 lines the NAD(+) pocket; sequence GSTDTG. Glu305 serves as the catalytic Proton acceptor. The Nucleophile role is filled by Cys339.

Belongs to the aldehyde dehydrogenase family. Homotetramer.

The protein localises to the mitochondrion matrix. It carries out the reaction an aldehyde + NAD(+) + H2O = a carboxylate + NADH + 2 H(+). Possesses activity on acetaldehyde and glycolaldehyde in vitro. The chain is Aldehyde dehydrogenase family 2 member B4, mitochondrial (ALDH2B4) from Arabidopsis thaliana (Mouse-ear cress).